Here is a 350-residue protein sequence, read N- to C-terminus: Biotin synthase (350 aa).

The 228-residue stretch at 38 to 265 folds into the Radical SAM core domain; sequence NHVQVSTLLS…MSAVRLSAGR (228 aa). Residues C53, C57, and C60 each coordinate [4Fe-4S] cluster. The [2Fe-2S] cluster site is built by C97, C128, C188, and R260.

This sequence belongs to the radical SAM superfamily. Biotin synthase family. In terms of assembly, homodimer. [4Fe-4S] cluster serves as cofactor. [2Fe-2S] cluster is required as a cofactor.

It carries out the reaction (4R,5S)-dethiobiotin + (sulfur carrier)-SH + 2 reduced [2Fe-2S]-[ferredoxin] + 2 S-adenosyl-L-methionine = (sulfur carrier)-H + biotin + 2 5'-deoxyadenosine + 2 L-methionine + 2 oxidized [2Fe-2S]-[ferredoxin]. It participates in cofactor biosynthesis; biotin biosynthesis; biotin from 7,8-diaminononanoate: step 2/2. Its function is as follows. Catalyzes the conversion of dethiobiotin (DTB) to biotin by the insertion of a sulfur atom into dethiobiotin via a radical-based mechanism. The chain is Biotin synthase from Vibrio atlanticus (strain LGP32) (Vibrio splendidus (strain Mel32)).